Reading from the N-terminus, the 234-residue chain is Toxic shock syndrome toxin-1 (234 aa).

The signal sequence occupies residues 1-40; sequence MNKKLLMNFFIVSPLLLATTATDFTPVPLSSNQIIKTAKA.

Belongs to the staphylococcal/streptococcal toxin family.

The protein resides in the secreted. Responsible for the symptoms of toxic shock syndrome. In Staphylococcus aureus, this protein is Toxic shock syndrome toxin-1 (tst).